The primary structure comprises 363 residues: MNNHIDIFNIPISKINLLDLNRQNLKYFLISLGAKNFCTEQVMSWIYNYYCDDFNKMLNISIKTRKKLYEKSYIFASEFIEEKISYDGTIKWITDINNQKIETVYMPEKKRSTLCVSSQIGCSLKCHFCATGQEGFQRNLKVSEIIAQIWQANKRLKEKNIKKNITNIVFMGMGEPLLNLKNVVSALTIILDEYGFGLSKRRVTLSTSGIVPALDKLRNMIDVSLAISLHAPNDFIRNIIMPINRKYNISSVLSSALKYFKYSNANRGGITIEYVMLDRINDSNENARQLSVLLSKIPSKINLIPWNSFSGPSFLCSNTDRINMFANILRKKGFTTTIRKNRGEDINAACGQLTGIITNYFKK.

The active-site Proton acceptor is E102. In terms of domain architecture, Radical SAM core spans 108-344 (EKKRSTLCVS…TTTIRKNRGE (237 aa)). A disulfide bond links C115 and C350. C122, C126, and C129 together coordinate [4Fe-4S] cluster. S-adenosyl-L-methionine is bound by residues 174-175 (GE), S206, 228-230 (SLH), and N307. Catalysis depends on C350, which acts as the S-methylcysteine intermediate.

It belongs to the radical SAM superfamily. RlmN family. It depends on [4Fe-4S] cluster as a cofactor.

It is found in the cytoplasm. The enzyme catalyses adenosine(2503) in 23S rRNA + 2 reduced [2Fe-2S]-[ferredoxin] + 2 S-adenosyl-L-methionine = 2-methyladenosine(2503) in 23S rRNA + 5'-deoxyadenosine + L-methionine + 2 oxidized [2Fe-2S]-[ferredoxin] + S-adenosyl-L-homocysteine. It catalyses the reaction adenosine(37) in tRNA + 2 reduced [2Fe-2S]-[ferredoxin] + 2 S-adenosyl-L-methionine = 2-methyladenosine(37) in tRNA + 5'-deoxyadenosine + L-methionine + 2 oxidized [2Fe-2S]-[ferredoxin] + S-adenosyl-L-homocysteine. In terms of biological role, specifically methylates position 2 of adenine 2503 in 23S rRNA and position 2 of adenine 37 in tRNAs. m2A2503 modification seems to play a crucial role in the proofreading step occurring at the peptidyl transferase center and thus would serve to optimize ribosomal fidelity. The protein is Dual-specificity RNA methyltransferase RlmN of Buchnera aphidicola subsp. Acyrthosiphon pisum (strain APS) (Acyrthosiphon pisum symbiotic bacterium).